The following is a 216-amino-acid chain: Alanyl-tRNA editing protein AlaX-M (216 aa).

H99, H103, and C182 together coordinate Zn(2+).

Belongs to the class-II aminoacyl-tRNA synthetase family. Editing domain AlaX-M subfamily. Monomer. Requires Zn(2+) as cofactor.

The protein resides in the cytoplasm. Functionally, functions in trans to edit the amino acid moiety from mischarged charged Gly-tRNA(Ala) and Ser-tRNA(Ala). This is Alanyl-tRNA editing protein AlaX-M (alaXM) from Pyrococcus horikoshii (strain ATCC 700860 / DSM 12428 / JCM 9974 / NBRC 100139 / OT-3).